Here is a 364-residue protein sequence, read N- to C-terminus: Isoflavone 4'-O-methyltransferase (364 aa).

S-adenosyl-L-methionine is bound by residues 206-209 (VGGG), Asp-230, 230-231 (DQ), 250-251 (DM), and Lys-264. The Proton acceptor role is filled by His-268.

This sequence belongs to the class I-like SAM-binding methyltransferase superfamily. Cation-independent O-methyltransferase family. COMT subfamily. As to quaternary structure, homodimer.

It carries out the reaction a 4'-hydroxyisoflavone + S-adenosyl-L-methionine = a 4'-methoxyisoflavone + S-adenosyl-L-homocysteine + H(+). The enzyme catalyses (2R,3S)-2,4',7-trihydroxyisoflavanone + S-adenosyl-L-methionine = (2R,3S)-2,7-dihydroxy-4'-methoxyisoflavanone + S-adenosyl-L-homocysteine + H(+). Functionally, 2-hydroxyisoflavanone 4'-O-methyltransferase involved in the biosynthesis of the phytoalexin medicarpin. Has also an in vitro (+)-6a-hydroxymaackiain-3-0-methyltransferase activity, converting the pterocarpan 6a-hydroxymaackiain into pisatin. No activity with di- or trihydroxylated isoflavones, including daidzein and genistein, or with (-)-medicarpin and maackiain. The dual activity for either 3- or 4'-O-methylation depends upon substrate availability. The protein is Isoflavone 4'-O-methyltransferase (HI4'OMT) of Medicago truncatula (Barrel medic).